The sequence spans 311 residues: uncharacterized protein (311 aa).

10 helical membrane passes run 13–33 (STAV…GFFS), 41–61 (FELV…CWLA), 76–96 (LQTL…FKSF), 103–123 (IAIS…SFFY), 128–148 (NVIS…ISGI), 157–177 (LMGS…FTTL), 192–212 (FLQT…GAFA), 218–238 (NWIM…LLFF), 248–268 (FISI…TVFT), and 272–292 (PDLY…LTLV). EamA domains are found at residues 24–147 (VIFG…LISG) and 166–292 (VLAA…LTLV).

The protein belongs to the EamA transporter family.

It localises to the cell membrane. This is an uncharacterized protein from Bacillus subtilis (strain 168).